The primary structure comprises 540 residues: Cytochrome P450 monooxygenase CYP3 (540 aa).

Asn2 carries N-linked (GlcNAc...) asparagine glycosylation. The chain crosses the membrane as a helical span at residues 26–46 (IFGLSSSTLVVLVAMIAVSTL). N-linked (GlcNAc...) asparagine glycans are attached at residues Asn100, Asn210, and Asn400. Cys471 provides a ligand contact to heme.

Belongs to the cytochrome P450 family. Heme is required as a cofactor.

The protein resides in the membrane. It functions in the pathway secondary metabolite biosynthesis. In terms of biological role, cytochrome P450 monooxygenase; part of the gene cluster that mediates the biosynthesis of itaconic acid and 2-hydroxyparaconate. Cis-aconitate is secreted by the mitochondrial tricarboxylate transporter MTT1. In the cytosol cis-aconitate is converted into trans-aconitate via isomerization by the aconitate-delta-isomerase ADI1. Decarboxylation of trans-aconitate by the trans-aconitate decarboxylase TAD1 then leads then to the production of itaconic acid. The cytochrome P450 monooxygenase CYP3 further converts itaconate to 2-hydroxyparaconate via oxidation of the double bond, leading to a transient epoxide, which can subsequently be lactonized to produce 2-hydroxyparaconate. Secretion of itaconate and possibly 2-hydroxyparaconate into the medium is mediated by the major facilitator ITP1. The glyoxalase domain-containing protein RDO1 is not involved in the biosynthesis of itaconate and 2-hydroxyparaconate, however, it might play a role in the further conversion of 2-hydroxyparaconate to itatartarate. The chain is Cytochrome P450 monooxygenase CYP3 from Mycosarcoma maydis (Corn smut fungus).